A 611-amino-acid polypeptide reads, in one-letter code: Immunoglobulin superfamily member 8 (611 aa).

A signal peptide spans 1–25 (MGVPSPTPLSSLLLLLLILGTRCYA). 4 Ig-like C2-type domains span residues 26-143 (RQVH…AKVE), 160-284 (PRGR…WVQV), 301-422 (SQLA…EAAS), and 429-554 (PVHV…ADYS). The Extracellular segment spans residues 26–577 (RQVHVPRGPL…VYPYTHAVDT (552 aa)). A disulfide bridge links cysteine 47 with cysteine 125. N-linked (GlcNAc...) asparagine glycans are attached at residues asparagine 48 and asparagine 137. A disulfide bridge connects residues cysteine 184 and cysteine 268. The short motif at 272–274 (EWI) is the EWI motif element. Intrachain disulfides connect cysteine 324/cysteine 404 and cysteine 460/cysteine 542. Asparagine 325 carries N-linked (GlcNAc...) asparagine glycosylation. A Phosphoserine modification is found at serine 516. A helical transmembrane segment spans residues 578–598 (LFVPLLVGTGVALVTGASVLA). Residues 599–611 (TITCCFMKRMRKR) are Cytoplasmic-facing. Residues cysteine 602 and cysteine 603 are each lipidated (S-palmitoyl cysteine).

As to quaternary structure, interacts directly with CD82 and CD9/tetraspanin-29. Also interacts with integrin alpha-3/beta-1 and integrin alpha-4/beta-1. Part of a complex composed of CD9, PTGFRN and CD81. Interacts with CD81/tetraspanin-28. In terms of tissue distribution, expressed in lymphocytes as well as in many tissues with higher expression in brain. Detected in all regions of the brain with weak expression in the pituitary. Expressed selectively by neurons but not by glial cells. Expressed in myoblasts (at protein level).

The protein localises to the cell membrane. In terms of biological role, member of the immunoglobulin superfamily (IgSF) that links tetraspanin-enriched microdomains to the actin cytoskeleton and plays several important roles in innate and adaptive immunity. Acts as an inducible receptor of HSPA8 on dendritic cells to enhance the CCL21/SLC-dependent migration of activated mature dendritic cells while attenuating their antigen-specific stimulatory capacities. In complex with alpha-actinins ACTN1 and ACTN4, regulates actin dynamics in the immune synapse and subsequent T-cell activation. Inhibits the entry of several viruses such as hepatitis C Virus (HCV) or HIV-1. Mechanistically, promotes a change in CD81 organization at the plasma membrane by significantly restricting its diffusion which in turn influences CD81 interaction with Claudin-1/CLDN1, preventing CLDN1 from acting as a co-receptor required for HCV entry. Accumulates at the presynaptic terminal, the producer cell side of the virological synapse, to prevent HIV-1 Env-mediated cell-cell fusion. Highly expressed on malignant cells with antigen presentation defects, interacts with NK receptor KLRA9 to suppress NK-cell cytotoxicity. May participate in the regulation of neurite outgrowth and maintenance of the neural network in the adult brain. The polypeptide is Immunoglobulin superfamily member 8 (Igsf8) (Mus musculus (Mouse)).